The following is a 404-amino-acid chain: Tryptophan synthase beta chain (404 aa).

Lysine 94 is modified (N6-(pyridoxal phosphate)lysine).

It belongs to the TrpB family. Tetramer of two alpha and two beta chains. The cofactor is pyridoxal 5'-phosphate.

It carries out the reaction (1S,2R)-1-C-(indol-3-yl)glycerol 3-phosphate + L-serine = D-glyceraldehyde 3-phosphate + L-tryptophan + H2O. Its pathway is amino-acid biosynthesis; L-tryptophan biosynthesis; L-tryptophan from chorismate: step 5/5. In terms of biological role, the beta subunit is responsible for the synthesis of L-tryptophan from indole and L-serine. This is Tryptophan synthase beta chain from Staphylococcus aureus (strain bovine RF122 / ET3-1).